Here is a 268-residue protein sequence, read N- to C-terminus: Gene 65 protein (268 aa).

This is Gene 65 protein (65) from Mycobacterium (Mycobacteriophage L5).